Reading from the N-terminus, the 311-residue chain is GTP cyclohydrolase FolE2 (311 aa).

This sequence belongs to the GTP cyclohydrolase IV family.

The catalysed reaction is GTP + H2O = 7,8-dihydroneopterin 3'-triphosphate + formate + H(+). Its pathway is cofactor biosynthesis; 7,8-dihydroneopterin triphosphate biosynthesis; 7,8-dihydroneopterin triphosphate from GTP: step 1/1. In terms of biological role, converts GTP to 7,8-dihydroneopterin triphosphate. This is GTP cyclohydrolase FolE2 from Xanthomonas campestris pv. campestris (strain B100).